Consider the following 385-residue polypeptide: Probable protein phosphatase 2C 38 (385 aa).

The region spanning 46 to 357 is the PPM-type phosphatase domain; it reads VAGEFSMSVI…DDITVIVVFL (312 aa). Position 77 is a phosphoserine (serine 77). Aspartate 88, glycine 89, aspartate 289, and aspartate 348 together coordinate Mn(2+).

This sequence belongs to the PP2C family. As to quaternary structure, interacts with BIK1. Mg(2+) serves as cofactor. The cofactor is Mn(2+). In terms of processing, phosphorylation at Ser-77 induces dissociation of PP2C38 from BIK1.

The protein resides in the cell membrane. It carries out the reaction O-phospho-L-seryl-[protein] + H2O = L-seryl-[protein] + phosphate. The enzyme catalyses O-phospho-L-threonyl-[protein] + H2O = L-threonyl-[protein] + phosphate. May dephosphorylate and repress plasma membrane H(+)-ATPases (PM H(+)-ATPases, e.g. AHA1 and AHA2), thus influencing negatively plant growth and fitness. Involved in pathogen-associated molecular pattern (PAMP)-triggered immunity (PTI) signaling. Negatively regulates immune responses by controlling the phosphorylation and activation status of BIK1, a central rate-limiting kinase in PTI signaling. Impairs the phosphorylation of the NADPH oxidase RBOHD by BIK1. The protein is Probable protein phosphatase 2C 38 of Arabidopsis thaliana (Mouse-ear cress).